The sequence spans 161 residues: Large ribosomal subunit protein bL17 (161 aa).

The interval 126–161 is disordered; that stretch reads TAAKKAPKTRRSRKKATASVAEAPTAEAASEEKAAE. Positions 130–141 are enriched in basic residues; the sequence is KAPKTRRSRKKA. A compositionally biased stretch (low complexity) spans 142 to 153; it reads TASVAEAPTAEA.

The protein belongs to the bacterial ribosomal protein bL17 family. Part of the 50S ribosomal subunit. Contacts protein L32.

This Parabacteroides distasonis (strain ATCC 8503 / DSM 20701 / CIP 104284 / JCM 5825 / NCTC 11152) protein is Large ribosomal subunit protein bL17.